The sequence spans 308 residues: UDP-N-acetylenolpyruvoylglucosamine reductase (308 aa).

The FAD-binding PCMH-type domain occupies 22–185; sequence RVGGPADWLF…TEATFRAEAG (164 aa). The active site involves arginine 165. Over residues 197-211 the composition is skewed to basic and acidic residues; it reads QIARRDSSQPTKERS. The segment at 197 to 228 is disordered; that stretch reads QIARRDSSQPTKERSAGSTFRNPAGFSSTGRA. The span at 212–226 shows a compositional bias: polar residues; the sequence is AGSTFRNPAGFSSTG. Serine 214 serves as the catalytic Proton donor. Glutamate 296 is an active-site residue.

It belongs to the MurB family. The cofactor is FAD.

It is found in the cytoplasm. The catalysed reaction is UDP-N-acetyl-alpha-D-muramate + NADP(+) = UDP-N-acetyl-3-O-(1-carboxyvinyl)-alpha-D-glucosamine + NADPH + H(+). Its pathway is cell wall biogenesis; peptidoglycan biosynthesis. In terms of biological role, cell wall formation. The protein is UDP-N-acetylenolpyruvoylglucosamine reductase of Cereibacter sphaeroides (strain ATCC 17023 / DSM 158 / JCM 6121 / CCUG 31486 / LMG 2827 / NBRC 12203 / NCIMB 8253 / ATH 2.4.1.) (Rhodobacter sphaeroides).